A 538-amino-acid polypeptide reads, in one-letter code: Cytochrome P450 18a1 (538 aa).

Residues 24–44 (QHLLMVFLGLLALVTLLQWLV) traverse the membrane as a helical segment. Residue Cys466 participates in heme binding.

Belongs to the cytochrome P450 family. It depends on heme as a cofactor. In terms of tissue distribution, expressed in body wall (epidermal and muscle cells) and mid- and hind-gut.

Its subcellular location is the endoplasmic reticulum membrane. It localises to the microsome membrane. Functionally, probably involved in steroid hormones biosynthesis. This chain is Cytochrome P450 18a1 (Cyp18a1), found in Drosophila melanogaster (Fruit fly).